The chain runs to 63 residues: Small ribosomal subunit protein bS21 (63 aa).

Belongs to the bacterial ribosomal protein bS21 family.

The sequence is that of Small ribosomal subunit protein bS21 from Syntrophus aciditrophicus (strain SB).